Reading from the N-terminus, the 360-residue chain is Dihydroorotate dehydrogenase (quinone) (360 aa).

FMN-binding positions include 67-71 and threonine 91; that span reads AGLDK. Lysine 71 contacts substrate. Position 116-120 (116-120) interacts with substrate; it reads NRMGF. FMN-binding residues include asparagine 145 and asparagine 176. Asparagine 176 lines the substrate pocket. Serine 179 functions as the Nucleophile in the catalytic mechanism. A substrate-binding site is contributed by asparagine 181. Residues lysine 222 and serine 250 each contribute to the FMN site. A substrate-binding site is contributed by 251-252; it reads NT. Residues glycine 272, glycine 301, and 322 to 323 contribute to the FMN site; that span reads YS.

This sequence belongs to the dihydroorotate dehydrogenase family. Type 2 subfamily. As to quaternary structure, monomer. The cofactor is FMN.

The protein resides in the cell membrane. The enzyme catalyses (S)-dihydroorotate + a quinone = orotate + a quinol. It participates in pyrimidine metabolism; UMP biosynthesis via de novo pathway; orotate from (S)-dihydroorotate (quinone route): step 1/1. Its function is as follows. Catalyzes the conversion of dihydroorotate to orotate with quinone as electron acceptor. In Deinococcus deserti (strain DSM 17065 / CIP 109153 / LMG 22923 / VCD115), this protein is Dihydroorotate dehydrogenase (quinone).